Here is a 516-residue protein sequence, read N- to C-terminus: Gastrula zinc finger protein XlCGF53.1 (516 aa).

2 disordered regions span residues 1–33 (MGMWEEASDTGMKGKKKKKDKNEEEEEERGKKE) and 200–220 (GNQSDCSINPLTEQIQGTDKP). A compositionally biased stretch (polar residues) spans 200-218 (GNQSDCSINPLTEQIQGTD). 7 consecutive C2H2-type zinc fingers follow at residues 312 to 334 (YICSECQKHFSTKAGLARHQKTH), 354 to 376 (FPCSECGKRFARRQHLTDHQSSH), 382 to 404 (YACSQCEKYFPHRSNLNRHLKLH), 410 to 432 (FPCSQCGKRFPCVSDLNIHRRVH), 438 to 460 (YSCSECGKCFKHHSNLTNHQRTH), 466 to 488 (FSCTECGKGFKDRSSLTVHHRTH), and 494 to 516 (FSCTECGKGFKDRSSLTVHHRTH).

Belongs to the krueppel C2H2-type zinc-finger protein family.

It localises to the nucleus. Its function is as follows. May be involved in transcriptional regulation. This is Gastrula zinc finger protein XlCGF53.1 from Xenopus laevis (African clawed frog).